We begin with the raw amino-acid sequence, 218 residues long: Large ribosomal subunit protein bL25 (218 aa).

The interval alanine 186–glutamate 218 is disordered.

It belongs to the bacterial ribosomal protein bL25 family. CTC subfamily. As to quaternary structure, part of the 50S ribosomal subunit; part of the 5S rRNA/L5/L18/L25 subcomplex. Contacts the 5S rRNA. Binds to the 5S rRNA independently of L5 and L18.

In terms of biological role, this is one of the proteins that binds to the 5S RNA in the ribosome where it forms part of the central protuberance. The protein is Large ribosomal subunit protein bL25 of Halothermothrix orenii (strain H 168 / OCM 544 / DSM 9562).